A 433-amino-acid polypeptide reads, in one-letter code: CinA-like protein (433 aa).

Belongs to the CinA family.

This Prochlorococcus marinus subsp. pastoris (strain CCMP1986 / NIES-2087 / MED4) protein is CinA-like protein.